We begin with the raw amino-acid sequence, 336 residues long: HTH-type transcriptional regulator AscG (336 aa).

The HTH lacI-type domain occupies 2–56 (TTMLEVAKRAGVSKATVSRVLSGNGYVSQETKDRVFQAVEESGYRPNLLARNLSA). A DNA-binding region (H-T-H motif) is located at residues 4 to 23 (MLEVAKRAGVSKATVSRVLS).

Functionally, repressor of the asc operon. The cryptic operon is activated by the insertion of IS186 into the ascG gene. This chain is HTH-type transcriptional regulator AscG (ascG), found in Escherichia coli (strain K12).